The sequence spans 217 residues: Probable transaldolase (217 aa).

Catalysis depends on lysine 83, which acts as the Schiff-base intermediate with substrate.

It belongs to the transaldolase family. Type 3B subfamily.

Its subcellular location is the cytoplasm. It carries out the reaction D-sedoheptulose 7-phosphate + D-glyceraldehyde 3-phosphate = D-erythrose 4-phosphate + beta-D-fructose 6-phosphate. The protein operates within carbohydrate degradation; pentose phosphate pathway; D-glyceraldehyde 3-phosphate and beta-D-fructose 6-phosphate from D-ribose 5-phosphate and D-xylulose 5-phosphate (non-oxidative stage): step 2/3. Its function is as follows. Transaldolase is important for the balance of metabolites in the pentose-phosphate pathway. This Caldicellulosiruptor saccharolyticus (strain ATCC 43494 / DSM 8903 / Tp8T 6331) protein is Probable transaldolase.